Consider the following 147-residue polypeptide: Hemoglobin subunit gamma-1 (147 aa).

The 145-residue stretch at Asn3–His147 folds into the Globin domain. The residue at position 13 (Thr13) is a Phosphothreonine. 3 positions are modified to phosphoserine: Ser45, Ser51, and Ser53. Position 60 is an N6-acetyllysine (Lys60). His64 provides a ligand contact to heme b. Lys83 is subject to N6-acetyllysine. His93 is a heme b binding site. The residue at position 94 (Cys94) is an S-nitrosocysteine. A Phosphoserine modification is found at Ser140.

It belongs to the globin family. As to quaternary structure, heterotetramer of two alpha chains and two gamma chains in fetal hemoglobin (Hb F). In terms of tissue distribution, red blood cells.

In terms of biological role, gamma chains make up the fetal hemoglobin F, in combination with alpha chains. This chain is Hemoglobin subunit gamma-1 (HBG1), found in Sapajus apella (Brown-capped capuchin).